We begin with the raw amino-acid sequence, 444 residues long: tRNA (guanine-N(7)-)-methyltransferase non-catalytic subunit TRM82 (444 aa).

7 WD repeats span residues 1-47 (MSVI…WSDD), 48-99 (FDKI…LGAP), 100-147 (PIYS…KRFC), 148-192 (FSKR…EPIL), 193-237 (GHVS…DKWL), 238-279 (FGHK…STFD), and 308-354 (FAVS…ITFP). The tract at residues 55–92 (RNTTAKEQQGQSSENENENKKLKSNKGDSIKRTAAKVP) is disordered. Basic and acidic residues predominate over residues 71–85 (NENKKLKSNKGDSIK). A Phosphoserine modification is found at serine 93.

Belongs to the WD repeat TRM82 family. Forms a heterodimer with the catalytic subunit TRM8.

The protein localises to the nucleus. It participates in tRNA modification; N(7)-methylguanine-tRNA biosynthesis. In terms of biological role, required for the formation of N(7)-methylguanine at position 46 (m7G46) in tRNA, a modification required to maintain stability of tRNAs; its absence resulting in tRNA decay. In the complex, it is required to stabilize and induce conformational changes of the catalytic subunit. This is tRNA (guanine-N(7)-)-methyltransferase non-catalytic subunit TRM82 from Saccharomyces cerevisiae (strain ATCC 204508 / S288c) (Baker's yeast).